A 281-amino-acid chain; its full sequence is 2-dehydro-3-deoxyphosphooctonate aldolase (281 aa).

Belongs to the KdsA family.

The protein resides in the cytoplasm. It carries out the reaction D-arabinose 5-phosphate + phosphoenolpyruvate + H2O = 3-deoxy-alpha-D-manno-2-octulosonate-8-phosphate + phosphate. The protein operates within carbohydrate biosynthesis; 3-deoxy-D-manno-octulosonate biosynthesis; 3-deoxy-D-manno-octulosonate from D-ribulose 5-phosphate: step 2/3. It functions in the pathway bacterial outer membrane biogenesis; lipopolysaccharide biosynthesis. The polypeptide is 2-dehydro-3-deoxyphosphooctonate aldolase (Ectopseudomonas mendocina (strain ymp) (Pseudomonas mendocina)).